A 709-amino-acid polypeptide reads, in one-letter code: Ribosomal RNA large subunit methyltransferase K/L (709 aa).

A THUMP domain is found at Leu43–Phe154.

It belongs to the methyltransferase superfamily. RlmKL family.

The protein resides in the cytoplasm. It carries out the reaction guanosine(2445) in 23S rRNA + S-adenosyl-L-methionine = N(2)-methylguanosine(2445) in 23S rRNA + S-adenosyl-L-homocysteine + H(+). The catalysed reaction is guanosine(2069) in 23S rRNA + S-adenosyl-L-methionine = N(2)-methylguanosine(2069) in 23S rRNA + S-adenosyl-L-homocysteine + H(+). Its function is as follows. Specifically methylates the guanine in position 2445 (m2G2445) and the guanine in position 2069 (m7G2069) of 23S rRNA. The protein is Ribosomal RNA large subunit methyltransferase K/L of Shewanella baltica (strain OS185).